The sequence spans 95 residues: Small ribosomal subunit protein uS19 (95 aa).

Belongs to the universal ribosomal protein uS19 family.

Protein S19 forms a complex with S13 that binds strongly to the 16S ribosomal RNA. The protein is Small ribosomal subunit protein uS19 of Myxococcus xanthus (strain DK1622).